The chain runs to 698 residues: ATP-dependent RNA helicase DHX33 (698 aa).

Disordered stretches follow at residues 1 to 20 (MPEE…SCPP) and 29 to 50 (TAGG…AQPS). The segment at 1 to 71 (MPEEASLPPA…RRSLPIFRAR (71 aa)) is required for nucleolar location. The span at 30-40 (AGGGGGAGGGR) shows a compositional bias: gly residues. The Helicase ATP-binding domain occupies 75-243 (LAQLRNLDNA…FNRAPVLYLE (169 aa)). 88-95 (GETGSGKT) lines the ATP pocket. The DEAH box signature appears at 185–188 (DEAH). The region spanning 271 to 441 (QIHQEAPASQ…SVILQLLAMK (171 aa)) is the Helicase C-terminal domain. The interval 462-553 (AIAQLDLLGA…ISSEGDHITL (92 aa)) is HA2; required for interaction with EIF3G and RPL26. The short motif at 536-550 (VQSVRKKFISSEGDH) is the Critical for rDNA-binding element.

It belongs to the DEAD box helicase family. DEAH subfamily. Interacts with UBTF. Interacts with DDX3X, EIF3G and EIF3H; the interaction is independent of RNA. Interacts (via HA2 region and Helicase C-terminal domain) with the components of the large ribosomal subunit RPL3, RPL7, RPL26 and RPL27. Binds to mRNA. Interacts (via the helicase C-terminal domain) with MAVS. Binds to double-stranded RNA (via the helicase C-terminal domain). In terms of processing, ubiquitinated, leading to its degradation by the proteasome. Deubiquitinated by USP36.

The protein resides in the nucleus. It localises to the nucleolus. It is found in the nucleoplasm. The protein localises to the cytoplasm. Its subcellular location is the inflammasome. It carries out the reaction ATP + H2O = ADP + phosphate + H(+). Implicated in nucleolar organization, ribosome biogenesis, protein synthesis and cytoplasmic dsRNA sensing. Stimulates RNA polymerase I transcription of the 47S precursor rRNA. Associates with ribosomal DNA (rDNA) loci where it is involved in POLR1A recruitment. In the cytoplasm, promotes elongation-competent 80S ribosome assembly at the late stage of mRNA translation initiation. Senses cytosolic dsRNA mediating NLRP3 inflammasome formation in macrophages and type I interferon production in myeloid dendritic cells. Required for NLRP3 activation induced by viral dsRNA and bacterial RNA. In dendritic cells, required for induction of type I interferon production induced by cytoplasmic dsRNA via the activation of MAPK and NF-kappa-B signaling pathways. The protein is ATP-dependent RNA helicase DHX33 of Mus musculus (Mouse).